Here is a 378-residue protein sequence, read N- to C-terminus: L-asparaginase-like protein GF11609 (378 aa).

A signal peptide spans Met1–Gly21. Cystine bridges form between Cys71/Cys76, Cys170/Cys186, and Cys325/Cys352.

The protein belongs to the Ntn-hydrolase family.

The chain is L-asparaginase-like protein GF11609 from Drosophila ananassae (Fruit fly).